The chain runs to 329 residues: Serpentine receptor class alpha-3 (329 aa).

Transmembrane regions (helical) follow at residues 25–45, 57–77, 104–124, 144–164, 187–207, 238–258, and 273–293; these read LIYF…LKVI, ILLY…GITI, YLEM…GLLF, GIIT…IIIW, TMFF…SLLI, ICFL…GVFL, and FWVV…ILLI.

The protein belongs to the nematode receptor-like protein sra family.

Its subcellular location is the membrane. In Caenorhabditis elegans, this protein is Serpentine receptor class alpha-3 (sra-3).